Reading from the N-terminus, the 218-residue chain is Small ribosomal subunit protein uS3c (218 aa).

The KH type-2 domain maps to 47–118; sequence VQKNMKTSSG…KLNIAITRIE (72 aa).

This sequence belongs to the universal ribosomal protein uS3 family. In terms of assembly, part of the 30S ribosomal subunit.

Its subcellular location is the plastid. It localises to the chloroplast. The sequence is that of Small ribosomal subunit protein uS3c (rps3) from Lactuca sativa (Garden lettuce).